The following is a 640-amino-acid chain: DNA gyrase subunit B (640 aa).

The 115-residue stretch at 423-537 folds into the Toprim domain; that stretch reads AELYIVEGDS…NGNIYIAQPP (115 aa). Glutamate 429, aspartate 502, and aspartate 504 together coordinate Mg(2+).

This sequence belongs to the type II topoisomerase GyrB family. Heterotetramer, composed of two GyrA and two GyrB chains. In the heterotetramer, GyrA contains the active site tyrosine that forms a transient covalent intermediate with DNA, while GyrB binds cofactors and catalyzes ATP hydrolysis. Requires Mg(2+) as cofactor. The cofactor is Mn(2+). Ca(2+) is required as a cofactor.

The protein resides in the cytoplasm. The catalysed reaction is ATP-dependent breakage, passage and rejoining of double-stranded DNA.. Its function is as follows. A type II topoisomerase that negatively supercoils closed circular double-stranded (ds) DNA in an ATP-dependent manner to modulate DNA topology and maintain chromosomes in an underwound state. Negative supercoiling favors strand separation, and DNA replication, transcription, recombination and repair, all of which involve strand separation. Also able to catalyze the interconversion of other topological isomers of dsDNA rings, including catenanes and knotted rings. Type II topoisomerases break and join 2 DNA strands simultaneously in an ATP-dependent manner. The sequence is that of DNA gyrase subunit B from Spiroplasma citri.